A 34-amino-acid chain; its full sequence is DWRVLVVLLPVLLAAGWAVRNILPYAVKQVQKLL.

The Lumenal segment spans residues 1–5 (DWRVL). Residues 6-22 (VVLLPVLLAAGWAVRNI) form a helical membrane-spanning segment. Residues 23 to 34 (LPYAVKQVQKLL) are Cytoplasmic-facing.

It belongs to the PsbY family. As to quaternary structure, PSII is composed of 1 copy each of membrane proteins PsbA, PsbB, PsbC, PsbD, PsbE, PsbF, PsbH, PsbI, PsbJ, PsbK, PsbL, PsbM, PsbT, PsbX, PsbY, PsbZ, Psb30/Ycf12, peripheral proteins PsbO, CyanoQ (PsbQ), PsbU, PsbV and a large number of cofactors. It forms dimeric complexes. This protein is only loosely associated with PSII, and is not often found in crystals. Requires PSII binds multiple chlorophylls, carotenoids and specific lipids. as cofactor.

It localises to the cellular thylakoid membrane. Its function is as follows. Loosely associated component of the core of photosystem II (PSII). PSII is a light-driven water plastoquinone oxidoreductase, using light energy to abstract electrons from H(2)O, generating a proton gradient subsequently used for ATP formation. The sequence is that of Photosystem II reaction center protein Y from Thermostichus vulcanus (Synechococcus vulcanus).